We begin with the raw amino-acid sequence, 1447 residues long: Sister chromatid cohesion protein PDS5 homolog B (1447 aa).

An HEAT repeat occupies 383 to 419 (LLVNDHLLNFVRERTLDKRWRVRKEAMMGLAQIYKKY). K1136 is modified (N6-acetyllysine). Residues 1137 to 1155 (PLSSAGKQSQTKSSRMETV) show a composition bias toward polar residues. The segment at 1137-1447 (PLSSAGKQSQ…RRRSSKRERR (311 aa)) is disordered. 6 positions are modified to phosphoserine: S1140, S1162, S1166, S1176, S1182, and S1191. Residues 1156 to 1167 (SNASSSSNPSSP) show a composition bias toward low complexity. Basic and acidic residues predominate over residues 1172 to 1184 (GRLDSTEMDHSEN). The span at 1196-1214 (KKSDKREDSDLVRSELEKP) shows a compositional bias: basic and acidic residues. Position 1221 is a phosphoserine (S1221). Residues 1225–1243 (PEEKLGMDDLSKLVQEQKP) are compositionally biased toward basic and acidic residues. Residues 1245-1254 (GSQRGRKRGH) show a composition bias toward basic residues. Residues 1247–1259 (QRGRKRGHAASES) constitute a DNA-binding region (a.T hook 1). A phosphoserine mark is found at S1257 and S1259. Over residues 1265-1274 (PEEKRHKEEL) the composition is skewed to basic and acidic residues. A Phosphoserine modification is found at S1283. Positions 1287–1299 (KGKRGRPPKPLGG) form a DNA-binding region, a.T hook 2. Composition is skewed to basic residues over residues 1309 to 1318 (TSKKGNKKKP) and 1341 to 1352 (KSKQQRTSKRAQ). Residues S1357 and S1365 each carry the phosphoserine modification. Residues 1358–1371 (PETSAVESTQSTPQ) show a composition bias toward polar residues. T1366 bears the Phosphothreonine mark. Residue S1368 is modified to Phosphoserine. T1369 and T1380 each carry phosphothreonine. A DNA-binding region (a.T hook 3) is located at residues 1371–1383 (QKGRGRPSKTPSP). Residues 1378–1387 (SKTPSPSQPK) are compositionally biased toward low complexity. Phosphoserine occurs at positions 1382, 1416, and 1419. The span at 1422–1432 (TTQEGAEEEDI) shows a compositional bias: acidic residues. Residues 1437–1447 (VRRRSSKRERR) are compositionally biased toward basic residues.

It belongs to the PDS5 family. In terms of assembly, interacts with the cohesin complex. Interacts with RAD21; the interaction is direct. Interacts with WAPL (via FGF motifs) or CDCA5 (via the FGF motif); the interaction is direct, cohesin-dependent and competitive. In terms of tissue distribution, highly expressed in intact prostate with levels decreasing after castration. Expressed exclusively in prostate cells inhibited from proliferating by long-term androgen exposure.

It localises to the nucleus. In terms of biological role, regulator of sister chromatid cohesion in mitosis which may stabilize cohesin complex association with chromatin. May couple sister chromatid cohesion during mitosis to DNA replication. Cohesion ensures that chromosome partitioning is accurate in both meiotic and mitotic cells and plays an important role in DNA repair. Plays a role in androgen-induced proliferative arrest in prostate cells. In Rattus norvegicus (Rat), this protein is Sister chromatid cohesion protein PDS5 homolog B (Pds5b).